Here is a 380-residue protein sequence, read N- to C-terminus: GATOR1 complex protein NPRL2 (380 aa).

Residues 1–133 (MGSGCRIECI…SKQKLVPIMT (133 aa)) are interaction with PDPK1. Arg-78 contributes to the GDP binding site. At Arg-78 the chain carries Asymmetric dimethylarginine. Glycyl lysine isopeptide (Lys-Gly) (interchain with G-Cter in ubiquitin) cross-links involve residues Lys-158 and Lys-357.

It belongs to the NPR2 family. Within the GATOR complex, component of the GATOR1 subcomplex, made of DEPDC5, NPRL2 and NPRL3. GATOR1 mediates the strong interaction of the GATOR complex with small GTPases Rag (RagA/RRAGA, RagB/RRAGB, RagC/RRAGC and/or RagD/RRAGD) heterodimers. GATOR1 interacts with GPR155/LYCHOS; interaction takes place in presence of cholesterol and prevents interaction between GATOR1 and KICSTOR. Interacts with PDPK1. In terms of processing, in the presence of abundant amino acids, ubiquitinated at Lys-158 and Lys-357 via 'Lys-6'-linked ubiquitination by the WDR24 component of the GATOR2 complex, thereby inhibiting the GATOR1 complex and promoting mTORC1 activation. Asymmetric dimethylation at Arg-78 by PRMT1 inhibits the GTPase activator activity of the GATOR1 complex and consequently inducing timely mTORC1 activation under methionine-sufficient conditions. In terms of tissue distribution, most abundant in skeletal muscle, followed by brain, liver and pancreas, with lower amounts in lung, kidney, placenta and heart. Expressed in the frontal lobe cortex as well as in the temporal, parietal, and occipital lobes. Expressed in most lung cancer cell lines tested.

It localises to the lysosome membrane. Functionally, catalytic component of the GATOR1 complex, a multiprotein complex that functions as an inhibitor of the amino acid-sensing branch of the mTORC1 pathway. In response to amino acid depletion, the GATOR1 complex has GTPase activating protein (GAP) activity and strongly increases GTP hydrolysis by RagA/RRAGA (or RagB/RRAGB) within heterodimeric Rag complexes, thereby turning them into their inactive GDP-bound form, releasing mTORC1 from lysosomal surface and inhibiting mTORC1 signaling. In the presence of abundant amino acids, the GATOR1 complex is ubiquitinated and inhibited by GATOR2. Within the GATOR1 complex, NPRL2 constitutes the catalytic subunit that mediates the GTPase activator activity and under methionine-sufficient conditions, the GTPase activator activity is inhibited by PRMT1 through methylation and consequently inducing timely mTORC1 activation. Its function is as follows. Suppresses Src-dependent tyrosine phosphorylation and activation of PDPK1 and its downstream signaling. Down-regulates PDPK1 kinase activity by interfering with tyrosine phosphorylation at 'Tyr-9', 'Tyr-373' and 'Tyr-376' residues. May act as a tumor suppressor. Suppresses cell growth and enhances sensitivity to various anticancer drugs. This Homo sapiens (Human) protein is GATOR1 complex protein NPRL2.